We begin with the raw amino-acid sequence, 479 residues long: Phosphoglycerate kinase, glycosomal (479 aa).

12 residues coordinate (2R)-3-phosphoglycerate: Val-23, Asp-24, Phe-25, Asn-26, Arg-39, Ser-61, His-62, Gly-64, Arg-65, Arg-132, His-168, and Arg-169. Residues Gly-214 and Ala-215 each coordinate ADP. Position 214 (Gly-214) interacts with CDP. 2 residues coordinate AMP: Ala-215 and Lys-216. Ala-215 contributes to the ATP binding site. Ala-215 provides a ligand contact to Mg(2+). Lys-216 serves as a coordination point for (2R)-3-phosphoglycerate. Asp-219 lines the CDP pocket. Residue Asp-219 coordinates Mg(2+). Positions 220 and 238 each coordinate ADP. AMP is bound at residue Lys-220. ATP is bound at residue Lys-220. Gly-238 contributes to the CDP binding site. AMP is bound by residues Ala-239 and Ala-311. ATP is bound by residues Ala-239 and Ala-311. Positions 311 and 335 each coordinate ADP. Residues Gly-336 and Phe-341 each coordinate CDP. ADP is bound by residues Phe-341, Glu-342, Asp-374, and Thr-375. Glu-342 is an AMP binding site. ATP-binding residues include Glu-342, Asp-374, and Thr-375. Asp-374 is a Mg(2+) binding site.

The protein belongs to the phosphoglycerate kinase family. Monomer. Mg(2+) serves as cofactor.

Its subcellular location is the glycosome. It carries out the reaction (2R)-3-phosphoglycerate + ATP = (2R)-3-phospho-glyceroyl phosphate + ADP. The protein operates within carbohydrate degradation; glycolysis; pyruvate from D-glyceraldehyde 3-phosphate: step 2/5. This chain is Phosphoglycerate kinase, glycosomal (PGKC), found in Leishmania mexicana.